The chain runs to 184 residues: ATP synthase subunit delta (184 aa).

It belongs to the ATPase delta chain family. F-type ATPases have 2 components, F(1) - the catalytic core - and F(0) - the membrane proton channel. F(1) has five subunits: alpha(3), beta(3), gamma(1), delta(1), epsilon(1). F(0) has three main subunits: a(1), b(2) and c(10-14). The alpha and beta chains form an alternating ring which encloses part of the gamma chain. F(1) is attached to F(0) by a central stalk formed by the gamma and epsilon chains, while a peripheral stalk is formed by the delta and b chains.

Its subcellular location is the cell inner membrane. In terms of biological role, f(1)F(0) ATP synthase produces ATP from ADP in the presence of a proton or sodium gradient. F-type ATPases consist of two structural domains, F(1) containing the extramembraneous catalytic core and F(0) containing the membrane proton channel, linked together by a central stalk and a peripheral stalk. During catalysis, ATP synthesis in the catalytic domain of F(1) is coupled via a rotary mechanism of the central stalk subunits to proton translocation. Its function is as follows. This protein is part of the stalk that links CF(0) to CF(1). It either transmits conformational changes from CF(0) to CF(1) or is implicated in proton conduction. The polypeptide is ATP synthase subunit delta (Zymomonas mobilis subsp. mobilis (strain ATCC 31821 / ZM4 / CP4)).